A 205-amino-acid polypeptide reads, in one-letter code: Low-density lipoprotein receptor class A domain-containing protein 1 (205 aa).

Residues 43–63 (LLLLLATVAALIALVTILGLP) traverse the membrane as a helical segment. An LDL-receptor class A 1 domain is found at 71 to 114 (ACITLTNRTGFLCHDQRSCIPASGVCDGVRTCTHGEDEDESLCR). 6 disulfide bridges follow: cysteine 72/cysteine 89, cysteine 83/cysteine 102, cysteine 96/cysteine 113, cysteine 141/cysteine 160, cysteine 163/cysteine 180, and cysteine 170/cysteine 193. In terms of domain architecture, LDL-receptor class A 2; atypical spans 115–161 (DVPQSLPHFLVAHCGDPASWIYSDQKCDGTNNCGDCSDELSPVTVCP). Positions 162–203 (PCGPGWWRCPSTFFKYCDCIPRHLCRDHVQHCSDWSDEYACP) constitute an LDL-receptor class A 3; atypical domain.

This sequence belongs to the LDLR family.

It localises to the membrane. This chain is Low-density lipoprotein receptor class A domain-containing protein 1 (LDLRAD1), found in Homo sapiens (Human).